Here is a 224-residue protein sequence, read N- to C-terminus: Heme response regulator HssR (224 aa).

In terms of domain architecture, Response regulatory spans 3–116 (QCLVVDDDSR…ELIFRIRAVL (114 aa)). Asp-52 is modified (4-aspartylphosphate). The ompR/PhoB-type DNA-binding region spans 124–222 (NSEMTIGNLT…VRGQGYKVEN (99 aa)).

Post-translationally, phosphorylated by HssS.

Its subcellular location is the cytoplasm. Member of the two-component regulatory system HssS/HssR involved in intracellular heme homeostasis and tempering of staphylococcal virulence. Phosphorylated HssR binds to a direct repeat sequence within hrtAB promoter and activates the expression of hrtAB, an efflux pump, in response to extracellular heme, hemin, hemoglobin or blood. The chain is Heme response regulator HssR (hssR) from Staphylococcus aureus (strain bovine RF122 / ET3-1).